Consider the following 467-residue polypeptide: Ergochrome gene cluster transcriptional coactivator CPUR_05432 (467 aa).

The HTH iclR-type domain maps to 109–179; the sequence is IAIQCEMLGS…RRGYVAHTPL (71 aa). The segment at residues 139 to 158 is a DNA-binding region (H-T-H motif); it reads IQDVANLSNVPEQQLAQMIG.

The protein resides in the nucleus. Its function is as follows. Transcriptional coactivator; part of the gene cluster responsible for the typical purple-black color of the ergot sclerotia. The ergochrome gene cluster produces several ergot pigments including the yellow ergochrome secalonic acid and its derivatives, as well as the red anthraquinones endocrocin and clavorubin. With CPUR_05433, coregulates the production of geodin. The protein is Ergochrome gene cluster transcriptional coactivator CPUR_05432 of Claviceps purpurea (strain 20.1) (Ergot fungus).